The following is a 120-amino-acid chain: Large ribosomal subunit protein bL12 (120 aa).

Positions 95–112 (KEGVSKEEAEEVQGKLEE) are enriched in basic and acidic residues. The tract at residues 95–120 (KEGVSKEEAEEVQGKLEEAGASVEVK) is disordered.

It belongs to the bacterial ribosomal protein bL12 family. Homodimer. Part of the ribosomal stalk of the 50S ribosomal subunit. Forms a multimeric L10(L12)X complex, where L10 forms an elongated spine to which 2 to 4 L12 dimers bind in a sequential fashion. Binds GTP-bound translation factors.

In terms of biological role, forms part of the ribosomal stalk which helps the ribosome interact with GTP-bound translation factors. Is thus essential for accurate translation. In Oceanobacillus iheyensis (strain DSM 14371 / CIP 107618 / JCM 11309 / KCTC 3954 / HTE831), this protein is Large ribosomal subunit protein bL12.